Consider the following 356-residue polypeptide: 1,2-phenylacetyl-CoA epoxidase, subunit E (356 aa).

An FAD-binding FR-type domain is found at 2 to 106 (TTFHSLTVAK…MVPQGHFGYQ (105 aa)). Residues 112 to 228 (QGRYLAIAAG…AAMMDDAETA (117 aa)) form an oxidoreductase region. Residues 262–354 (QKVTVRQDGR…DVVVDFDAKG (93 aa)) enclose the 2Fe-2S ferredoxin-type domain. Positions 299, 304, 307, and 337 each coordinate [2Fe-2S] cluster.

In the N-terminal section; belongs to the FAD-binding oxidoreductase type 6 family. [2Fe-2S] cluster is required as a cofactor. The cofactor is FAD.

The protein operates within aromatic compound metabolism; phenylacetate degradation. Its function is as follows. Component of 1,2-phenylacetyl-CoA epoxidase multicomponent enzyme system which catalyzes the reduction of phenylacetyl-CoA (PA-CoA) to form 1,2-epoxyphenylacetyl-CoA. The subunit E is a reductase with a preference for NADPH and FAD, capable of reducing cytochrome c. This chain is 1,2-phenylacetyl-CoA epoxidase, subunit E (paaE), found in Escherichia coli (strain K12).